The primary structure comprises 449 residues: MYHLWIKCLAAWIFLKRCNGVHAMPAKAPMYPNEPFIVLWNAPTTQCPLRYKVDLDLKTFHIVANPNDSLSGSVVTIFYPNHLGVYPHIDERGHFFHGIIPQNESLTKHLNKSKSDINRMIPLKTFHGLGVIDWENWRPQWDRNWGSKNVYRNRSIQFAKELHPELSEDKIKRLAKKEYEKAAKSFMRDTLLLAEEMRPNGYWGYYLYPDCQNYDYKTKGDQYTGKCPDIEMSRNDQLLWLWRDSTALFPNVYLEIILRSSDNALKFVHHRLKESMRIASMAREDYALPVFVYARPFYAYTFEPLTQEDLVTTVGETAAMGAAGIVFWGSMQYASTVDSCQKVKTYMNGPLGRYIVNVTTAAKICSHALCRKNGRCVRKHSDSNAFLHLFPESFRIMVHANATEKKAIVKGKLELKDLIYLRKNFMCQCYQGWKGLYCEEYSIKDIRKI.

The first 23 residues, 1–23, serve as a signal peptide directing secretion; that stretch reads MYHLWIKCLAAWIFLKRCNGVHA. Disulfide bonds link Cys-47–Cys-340 and Cys-211–Cys-227. Asn-67, Asn-103, and Asn-111 each carry an N-linked (GlcNAc...) asparagine glycan. Glu-135 (proton donor) is an active-site residue. Asn-153 carries an N-linked (GlcNAc...) asparagine glycan. An N-linked (GlcNAc...) asparagine glycan is attached at Asn-357. 3 cysteine pairs are disulfide-bonded: Cys-365/Cys-376, Cys-370/Cys-427, and Cys-429/Cys-438. Asn-401 carries an N-linked (GlcNAc...) asparagine glycan. The region spanning 427-438 is the EGF-like domain; sequence CQCYQGWKGLYC.

The protein belongs to the glycosyl hydrolase 56 family. In terms of assembly, monomer. As to expression, expressed by the venom gland.

The protein resides in the secreted. The enzyme catalyses Random hydrolysis of (1-&gt;4)-linkages between N-acetyl-beta-D-glucosamine and D-glucuronate residues in hyaluronate.. Functionally, snake venom endo-hyaluronidase that degrades hyaluronan to smaller oligosaccharide fragments. In venom, it is not toxic by itself, but increases the diffusion of other venom proteins by degrading the extracellular matrix. In addition, it displays antiedematogenic activity. The sequence is that of Hyaluronidase-1 from Bitis arietans (African puff adder).